We begin with the raw amino-acid sequence, 102 residues long: MTPGELLPSDGPDHVLNPDRRTLTLVIENGGDRPIQVGSHYHFAETNGALRFDRAAAHGMRLNIASGTAVRFEPGQQRTVELVDYAGDRTVYGFRGLVQGKL.

The protein belongs to the urease beta subunit family. As to quaternary structure, heterotrimer of UreA (gamma), UreB (beta) and UreC (alpha) subunits. Three heterotrimers associate to form the active enzyme.

The protein resides in the cytoplasm. It catalyses the reaction urea + 2 H2O + H(+) = hydrogencarbonate + 2 NH4(+). Its pathway is nitrogen metabolism; urea degradation; CO(2) and NH(3) from urea (urease route): step 1/1. The chain is Urease subunit beta from Methylibium petroleiphilum (strain ATCC BAA-1232 / LMG 22953 / PM1).